The chain runs to 208 residues: Uracil phosphoribosyltransferase (208 aa).

5-phospho-alpha-D-ribose 1-diphosphate is bound by residues R78, R103, and 130–138 (DPMLATGGS). Residues I193 and 198–200 (GDA) contribute to the uracil site. Residue D199 coordinates 5-phospho-alpha-D-ribose 1-diphosphate.

Belongs to the UPRTase family. Mg(2+) serves as cofactor.

The enzyme catalyses UMP + diphosphate = 5-phospho-alpha-D-ribose 1-diphosphate + uracil. Its pathway is pyrimidine metabolism; UMP biosynthesis via salvage pathway; UMP from uracil: step 1/1. Its activity is regulated as follows. Allosterically activated by GTP. Its function is as follows. Catalyzes the conversion of uracil and 5-phospho-alpha-D-ribose 1-diphosphate (PRPP) to UMP and diphosphate. The polypeptide is Uracil phosphoribosyltransferase (Haemophilus influenzae (strain PittEE)).